Consider the following 206-residue polypeptide: Small ribosomal subunit protein uS4 (206 aa).

In terms of domain architecture, S4 RNA-binding spans 94-157 (RRLDNVVYRL…RRRTYFKNLI (64 aa)).

Belongs to the universal ribosomal protein uS4 family. Part of the 30S ribosomal subunit. Contacts protein S5. The interaction surface between S4 and S5 is involved in control of translational fidelity.

One of the primary rRNA binding proteins, it binds directly to 16S rRNA where it nucleates assembly of the body of the 30S subunit. In terms of biological role, with S5 and S12 plays an important role in translational accuracy. The polypeptide is Small ribosomal subunit protein uS4 (Roseiflexus sp. (strain RS-1)).